The following is a 375-amino-acid chain: Queuine tRNA-ribosyltransferase (375 aa).

Aspartate 90 (proton acceptor) is an active-site residue. Substrate is bound by residues 90–94 (DSGGF), aspartate 144, glutamine 190, and glycine 217. The tract at residues 248–254 (GIGTPHY) is RNA binding. Aspartate 267 acts as the Nucleophile in catalysis. The interval 272-276 (TRIAR) is RNA binding; important for wobble base 34 recognition. Residues cysteine 305, cysteine 307, cysteine 310, and histidine 336 each contribute to the Zn(2+) site.

It belongs to the queuine tRNA-ribosyltransferase family. In terms of assembly, homodimer. Within each dimer, one monomer is responsible for RNA recognition and catalysis, while the other monomer binds to the replacement base PreQ1. Requires Zn(2+) as cofactor.

It catalyses the reaction 7-aminomethyl-7-carbaguanine + guanosine(34) in tRNA = 7-aminomethyl-7-carbaguanosine(34) in tRNA + guanine. It functions in the pathway tRNA modification; tRNA-queuosine biosynthesis. In terms of biological role, catalyzes the base-exchange of a guanine (G) residue with the queuine precursor 7-aminomethyl-7-deazaguanine (PreQ1) at position 34 (anticodon wobble position) in tRNAs with GU(N) anticodons (tRNA-Asp, -Asn, -His and -Tyr). Catalysis occurs through a double-displacement mechanism. The nucleophile active site attacks the C1' of nucleotide 34 to detach the guanine base from the RNA, forming a covalent enzyme-RNA intermediate. The proton acceptor active site deprotonates the incoming PreQ1, allowing a nucleophilic attack on the C1' of the ribose to form the product. After dissociation, two additional enzymatic reactions on the tRNA convert PreQ1 to queuine (Q), resulting in the hypermodified nucleoside queuosine (7-(((4,5-cis-dihydroxy-2-cyclopenten-1-yl)amino)methyl)-7-deazaguanosine). The protein is Queuine tRNA-ribosyltransferase of Borrelia recurrentis (strain A1).